A 168-amino-acid polypeptide reads, in one-letter code: 2-C-methyl-D-erythritol 2,4-cyclodiphosphate synthase (168 aa).

A divalent metal cation-binding residues include Asp8 and His10. 4-CDP-2-C-methyl-D-erythritol 2-phosphate is bound by residues 8 to 10 and 34 to 35; these read DLH and HS. Position 42 (His42) interacts with a divalent metal cation. Residues 56–58, 61–65, 132–135, and Arg142 each bind 4-CDP-2-C-methyl-D-erythritol 2-phosphate; these read DIG, FPDTD, and TTTE.

The protein belongs to the IspF family. As to quaternary structure, homotrimer. A divalent metal cation serves as cofactor.

It carries out the reaction 4-CDP-2-C-methyl-D-erythritol 2-phosphate = 2-C-methyl-D-erythritol 2,4-cyclic diphosphate + CMP. It functions in the pathway isoprenoid biosynthesis; isopentenyl diphosphate biosynthesis via DXP pathway; isopentenyl diphosphate from 1-deoxy-D-xylulose 5-phosphate: step 4/6. Its function is as follows. Involved in the biosynthesis of isopentenyl diphosphate (IPP) and dimethylallyl diphosphate (DMAPP), two major building blocks of isoprenoid compounds. Catalyzes the conversion of 4-diphosphocytidyl-2-C-methyl-D-erythritol 2-phosphate (CDP-ME2P) to 2-C-methyl-D-erythritol 2,4-cyclodiphosphate (ME-CPP) with a corresponding release of cytidine 5-monophosphate (CMP). The polypeptide is 2-C-methyl-D-erythritol 2,4-cyclodiphosphate synthase (Desulfosudis oleivorans (strain DSM 6200 / JCM 39069 / Hxd3) (Desulfococcus oleovorans)).